Consider the following 298-residue polypeptide: ATP synthase gamma chain (298 aa).

This sequence belongs to the ATPase gamma chain family. As to quaternary structure, F-type ATPases have 2 components, CF(1) - the catalytic core - and CF(0) - the membrane proton channel. CF(1) has five subunits: alpha(3), beta(3), gamma(1), delta(1), epsilon(1). CF(0) has three main subunits: a, b and c.

It is found in the cell inner membrane. Functionally, produces ATP from ADP in the presence of a proton gradient across the membrane. The gamma chain is believed to be important in regulating ATPase activity and the flow of protons through the CF(0) complex. This chain is ATP synthase gamma chain, found in Francisella tularensis subsp. holarctica (strain LVS).